A 202-amino-acid polypeptide reads, in one-letter code: ATP-dependent Clp protease proteolytic subunit (202 aa).

The Nucleophile role is filled by serine 106. Residue histidine 131 is part of the active site.

The protein belongs to the peptidase S14 family. As to quaternary structure, fourteen ClpP subunits assemble into 2 heptameric rings which stack back to back to give a disk-like structure with a central cavity, resembling the structure of eukaryotic proteasomes.

It localises to the cytoplasm. The enzyme catalyses Hydrolysis of proteins to small peptides in the presence of ATP and magnesium. alpha-casein is the usual test substrate. In the absence of ATP, only oligopeptides shorter than five residues are hydrolyzed (such as succinyl-Leu-Tyr-|-NHMec, and Leu-Tyr-Leu-|-Tyr-Trp, in which cleavage of the -Tyr-|-Leu- and -Tyr-|-Trp bonds also occurs).. Cleaves peptides in various proteins in a process that requires ATP hydrolysis. Has a chymotrypsin-like activity. Plays a major role in the degradation of misfolded proteins. The polypeptide is ATP-dependent Clp protease proteolytic subunit (Shewanella sp. (strain MR-7)).